The primary structure comprises 246 residues: MAGPAQAGVELIRDGRRHDGRLPEDLRPVRMQVGILHNADGSALVEFGRTRVLAAVYGPREPHQRFYVLPDRAALRVRYHMAPFSTDERKSPAPSRREIELSKVVREALEPVVLAEEFPRTVIDVFLEVLQADGGTRTAAVTAASLALADAGIPMRALVGGVAVGKIQGVLVVDVDELEDMYGEADMPVAAAPDIGEITLLQLNGVLTGEEFRTALAMALRAIDRVVEMEKEAIRKSYLEVGGGQE.

The protein belongs to the RNase PH family. Rrp41 subfamily. Component of the archaeal exosome complex. Forms a hexameric ring-like arrangement composed of 3 Rrp41-Rrp42 heterodimers. The hexameric ring associates with a trimer of Rrp4 and/or Csl4 subunits.

The protein resides in the cytoplasm. Its function is as follows. Catalytic component of the exosome, which is a complex involved in RNA degradation. Has 3'-&gt;5' exoribonuclease activity. Can also synthesize heteromeric RNA-tails. The polypeptide is Exosome complex component Rrp41 (Aeropyrum pernix (strain ATCC 700893 / DSM 11879 / JCM 9820 / NBRC 100138 / K1)).